The sequence spans 1373 residues: DNA-directed RNA polymerase subunit beta'' (1373 aa).

Zn(2+) is bound by residues cysteine 220, cysteine 293, cysteine 300, and cysteine 303.

The protein belongs to the RNA polymerase beta' chain family. RpoC2 subfamily. In plastids the minimal PEP RNA polymerase catalytic core is composed of four subunits: alpha, beta, beta', and beta''. When a (nuclear-encoded) sigma factor is associated with the core the holoenzyme is formed, which can initiate transcription. Zn(2+) serves as cofactor.

It localises to the plastid. It is found in the chloroplast. It carries out the reaction RNA(n) + a ribonucleoside 5'-triphosphate = RNA(n+1) + diphosphate. Functionally, DNA-dependent RNA polymerase catalyzes the transcription of DNA into RNA using the four ribonucleoside triphosphates as substrates. The chain is DNA-directed RNA polymerase subunit beta'' from Lepidium virginicum (Virginia pepperweed).